Consider the following 377-residue polypeptide: Alanine racemase (377 aa).

Residue K37 is the Proton acceptor; specific for D-alanine of the active site. Residue K37 is modified to N6-(pyridoxal phosphate)lysine. R135 serves as a coordination point for substrate. The Proton acceptor; specific for L-alanine role is filled by Y271. A substrate-binding site is contributed by M319.

Belongs to the alanine racemase family. It depends on pyridoxal 5'-phosphate as a cofactor.

The catalysed reaction is L-alanine = D-alanine. It participates in amino-acid biosynthesis; D-alanine biosynthesis; D-alanine from L-alanine: step 1/1. Functionally, catalyzes the interconversion of L-alanine and D-alanine. May also act on other amino acids. The chain is Alanine racemase (alr) from Helicobacter pylori (strain J99 / ATCC 700824) (Campylobacter pylori J99).